We begin with the raw amino-acid sequence, 143 residues long: UPF0047 protein MTH_771 (143 aa).

Belongs to the UPF0047 family.

The chain is UPF0047 protein MTH_771 from Methanothermobacter thermautotrophicus (strain ATCC 29096 / DSM 1053 / JCM 10044 / NBRC 100330 / Delta H) (Methanobacterium thermoautotrophicum).